The primary structure comprises 213 residues: Pyridoxine/pyridoxamine 5'-phosphate oxidase (213 aa).

Substrate is bound by residues 9 to 12 and K67; that span reads RKSY. FMN-binding positions include 62–67, 77–78, R83, and K84; these read RVVLIK and YT. Substrate contacts are provided by Y124, R128, and S132. FMN-binding positions include 141 to 142 and W185; that span reads QS. 191–193 contributes to the substrate binding site; that stretch reads RLH. An FMN-binding site is contributed by R195.

It belongs to the pyridoxamine 5'-phosphate oxidase family. As to quaternary structure, homodimer. FMN is required as a cofactor.

The catalysed reaction is pyridoxamine 5'-phosphate + O2 + H2O = pyridoxal 5'-phosphate + H2O2 + NH4(+). The enzyme catalyses pyridoxine 5'-phosphate + O2 = pyridoxal 5'-phosphate + H2O2. The protein operates within cofactor metabolism; pyridoxal 5'-phosphate salvage; pyridoxal 5'-phosphate from pyridoxamine 5'-phosphate: step 1/1. It participates in cofactor metabolism; pyridoxal 5'-phosphate salvage; pyridoxal 5'-phosphate from pyridoxine 5'-phosphate: step 1/1. In terms of biological role, catalyzes the oxidation of either pyridoxine 5'-phosphate (PNP) or pyridoxamine 5'-phosphate (PMP) into pyridoxal 5'-phosphate (PLP). This chain is Pyridoxine/pyridoxamine 5'-phosphate oxidase, found in Methylibium petroleiphilum (strain ATCC BAA-1232 / LMG 22953 / PM1).